The primary structure comprises 952 residues: Alpha-L-rhamnosidase (952 aa).

An N-terminal signal peptide occupies residues 1-21 (MKYNKLLFSLLLLAVFCFSCK). Residues D520, 524–525 (RE), D532, and W594 contribute to the alpha-L-rhamnose site. E525 serves as the catalytic Proton donor. The active-site Proton acceptor is the E809. H826 lines the alpha-L-rhamnose pocket.

The protein belongs to the glycosyl hydrolase 78 family.

It is found in the cell membrane. It catalyses the reaction Hydrolysis of terminal non-reducing alpha-L-rhamnose residues in alpha-L-rhamnosides.. Its function is as follows. Alpha-L-rhamnosidase that may be involved in ulvan degradation. Ulvan is the main polysaccharide component of the Ulvales (green seaweed) cell wall. It is composed of disaccharide building blocks comprising 3-sulfated rhamnose (Rha3S) linked to D-glucuronic acid (GlcA), L-iduronic acid (IduA), or D-xylose (Xyl). In Formosa agariphila (strain DSM 15362 / KCTC 12365 / LMG 23005 / KMM 3901 / M-2Alg 35-1), this protein is Alpha-L-rhamnosidase.